Here is a 142-residue protein sequence, read N- to C-terminus: Large ribosomal subunit protein uL13 (142 aa).

The protein belongs to the universal ribosomal protein uL13 family. Part of the 50S ribosomal subunit.

Its function is as follows. This protein is one of the early assembly proteins of the 50S ribosomal subunit, although it is not seen to bind rRNA by itself. It is important during the early stages of 50S assembly. This is Large ribosomal subunit protein uL13 from Pseudoalteromonas translucida (strain TAC 125).